A 630-amino-acid chain; its full sequence is Low affinity heme transporter str3 (630 aa).

Basic and acidic residues predominate over residues 1–26; that stretch reads MEAKETHSISDHEVELQDAKPEEKSE. The disordered stretch occupies residues 1–51; that stretch reads MEAKETHSISDHEVELQDAKPEEKSENGNFVFEKAFSSDEEKGSGYNTNET. The Cytoplasmic portion of the chain corresponds to 1-79; the sequence is MEAKETHSIS…VRDSIYQNKR (79 aa). Residues serine 10 and serine 38 each carry the phosphoserine modification. A helical transmembrane segment spans residues 80–100; that stretch reads GMYLAYAFGIAILACSWASAI. Over 101-120 the chain is Extracellular; that stretch reads QSSTTYSYQVYATASFNRTS. The helical transmembrane segment at 121 to 141 threads the bilayer; it reads MISTLEIATAIISSVCKPILG. Residues 142-154 are Cytoplasmic-facing; it reads KFSDITSRPMTYT. Residues 155–175 traverse the membrane as a helical segment; sequence LVLLFYVIGFIVVASSSTISA. A topological domain (extracellular) is located at residue tyrosine 176. Residues 177–197 form a helical membrane-spanning segment; that stretch reads VIGSVFISIGSSGLDYLNTLV. Over 198 to 208 the chain is Cytoplasmic; it reads VGDLTSLKWRG. Residues 209–229 traverse the membrane as a helical segment; it reads FMTALLSTPYIATVWFTGFIV. The Extracellular portion of the chain corresponds to 230–241; that stretch reads QGIIDSNWRWGY. Residues 242 to 262 traverse the membrane as a helical segment; sequence GMFAIIMPAVMTPAVIILMYL. At 263 to 302 the chain is on the cytoplasmic side; the sequence is ERQANKDENIKKIINYQTEEKNKNKQSKWQKLWKAVLEVD. A helical membrane pass occupies residues 303–323; the sequence is LFGLILLGVGWSILLLPFSLT. The Extracellular portion of the chain corresponds to 324–335; it reads SYAKNGWKNPSM. A helical transmembrane segment spans residues 336–356; sequence IAMMVVGGVILIAYSGYEMFI. Topologically, residues 357–370 are cytoplasmic; that stretch reads APYPSCPRRVMNRT. A helical membrane pass occupies residues 371–391; it reads FITAVIIDFFYYLAGYLQSMY. Over 392-406 the chain is Extracellular; the sequence is FTTYTWILYDWSYRD. A helical transmembrane segment spans residues 407–427; that stretch reads WTYFNNTMTIALCVFGVFAGA. Over 428–439 the chain is Cytoplasmic; it reads MHRVFHRYKYLQ. A helical transmembrane segment spans residues 440–460; the sequence is IIGLVIKIVGYGILIRPNFAA. Over 461 to 465 the chain is Extracellular; the sequence is TGKVD. The chain crosses the membrane as a helical span at residues 466 to 486; that stretch reads LAWSLILIGMGGSFSVVGSQV. Residues 487–502 lie on the Cytoplasmic side of the membrane; it reads SCQASVPHQDLAIASS. The chain crosses the membrane as a helical span at residues 503–523; it reads LLPLYTNIGGAIGAAIASPIF. The interval 522 to 576 is heme binding; sequence IFSNKVPKYLREYLPSSINDTQVYNFYSDSSLIREYPVGTEIRDGAIKAYSRSMF. The Extracellular portion of the chain corresponds to 524 to 574; it reads SNKVPKYLREYLPSSINDTQVYNFYSDSSLIREYPVGTEIRDGAIKAYSRS. A helical transmembrane segment spans residues 575–595; that stretch reads MFFLLVPAVSLSFIPLAAAFW. Residues 596 to 630 lie on the Cytoplasmic side of the membrane; that stretch reads QSNFYLGNQQNAVEGDQDHKKKGDKETTQEEKIII. A disordered region spans residues 610–630; sequence GDQDHKKKGDKETTQEEKIII. Residues 611 to 630 are compositionally biased toward basic and acidic residues; the sequence is DQDHKKKGDKETTQEEKIII.

This sequence belongs to the major facilitator superfamily.

The protein resides in the cell membrane. Low affinity heme transporter involved in the assimilation of exogenous heme during conditions of low cellular iron. The polypeptide is Low affinity heme transporter str3 (Schizosaccharomyces pombe (strain 972 / ATCC 24843) (Fission yeast)).